The following is a 307-amino-acid chain: Nucleotide-binding protein Acid345_3782 (307 aa).

Gly-31 to Ala-38 provides a ligand contact to ATP. A GTP-binding site is contributed by Asp-81–Glu-84.

The protein belongs to the RapZ-like family.

Displays ATPase and GTPase activities. This is Nucleotide-binding protein Acid345_3782 from Koribacter versatilis (strain Ellin345).